The sequence spans 234 residues: Large ribosomal subunit protein uL1 (234 aa).

Belongs to the universal ribosomal protein uL1 family. As to quaternary structure, part of the 50S ribosomal subunit.

Its function is as follows. Binds directly to 23S rRNA. The L1 stalk is quite mobile in the ribosome, and is involved in E site tRNA release. Protein L1 is also a translational repressor protein, it controls the translation of the L11 operon by binding to its mRNA. This chain is Large ribosomal subunit protein uL1, found in Bartonella tribocorum (strain CIP 105476 / IBS 506).